Consider the following 292-residue polypeptide: Putative rRNA 2'-O-methyltransferase fibrillarin 3 (292 aa).

A disordered region spans residues 1–58; sequence MKPPQRGRGGGVRGGRGLARGGEGSAVRGSGRGGESGRGRGPGRVKSESDGGIKGGSK. Residues 7–42 show a composition bias toward gly residues; it reads GRGGGVRGGRGLARGGEGSAVRGSGRGGESGRGRGP. Residues 146-147, 165-166, 190-191, and 210-213 each bind S-adenosyl-L-methionine; these read YT, EH, DA, and DVNH.

The protein belongs to the methyltransferase superfamily. Fibrillarin family. In terms of assembly, component of box C/D small nucleolar ribonucleoprotein (snoRNP) particles. As to expression, not detectable by RT-PCR.

The protein localises to the nucleus. The protein resides in the nucleolus. The catalysed reaction is L-glutaminyl-[histone H2A] + S-adenosyl-L-methionine = N(5)-methyl-L-glutaminyl-[histone H2A] + S-adenosyl-L-homocysteine + H(+). Its function is as follows. S-adenosyl-L-methionine-dependent methyltransferase that has the ability to methylate both RNAs and proteins. Involved in pre-rRNA processing. Utilizes the methyl donor S-adenosyl-L-methionine to catalyze the site-specific 2'-hydroxyl methylation of ribose moieties in pre-ribosomal RNA. Site specificity is provided by a guide RNA that base pairs with the substrate. Methylation occurs at a characteristic distance from the sequence involved in base pairing with the guide RNA. Also acts as a protein methyltransferase by mediating methylation of 'Gln-105' of histone H2A (H2AQ105me), a modification that impairs binding of the FACT complex and is specifically present at 35S ribosomal DNA locus. This chain is Putative rRNA 2'-O-methyltransferase fibrillarin 3 (FIB3), found in Arabidopsis thaliana (Mouse-ear cress).